We begin with the raw amino-acid sequence, 413 residues long: Na(+)-translocating NADH-quinone reductase subunit B (413 aa).

3 helical membrane passes run 55–75 (IMIM…YNAG), 128–148 (FLPI…LFCM), and 163–183 (ILFA…LGIT). T235 bears the FMN phosphoryl threonine mark. Helical transmembrane passes span 267-287 (IPGS…AMIV), 296-316 (IIAG…VIGS), 324-344 (MPWH…FMAT), 357-377 (WWYG…NPAY), and 380-400 (GMML…HVVI).

This sequence belongs to the NqrB/RnfD family. In terms of assembly, composed of six subunits; NqrA, NqrB, NqrC, NqrD, NqrE and NqrF. FMN is required as a cofactor.

The protein resides in the cell inner membrane. The catalysed reaction is a ubiquinone + n Na(+)(in) + NADH + H(+) = a ubiquinol + n Na(+)(out) + NAD(+). Its function is as follows. NQR complex catalyzes the reduction of ubiquinone-1 to ubiquinol by two successive reactions, coupled with the transport of Na(+) ions from the cytoplasm to the periplasm. NqrA to NqrE are probably involved in the second step, the conversion of ubisemiquinone to ubiquinol. This is Na(+)-translocating NADH-quinone reductase subunit B from Vibrio campbellii (strain ATCC BAA-1116).